A 369-amino-acid chain; its full sequence is Caffeine synthase 1 (369 aa).

An S-adenosyl-L-homocysteine-binding site is contributed by Tyr-24. Thr-31 serves as a coordination point for caffeine. The S-adenosyl-L-homocysteine site is built by Cys-66, Asn-71, Asp-103, Leu-104, Ser-138, and Phe-139. Caffeine is bound by residues Tyr-156, His-159, and Trp-160. Asn-177 lines the Mg(2+) pocket. Caffeine is bound at residue Arg-225. Residues Asp-263, Phe-265, and Asn-266 each coordinate Mg(2+). Phe-321 is a caffeine binding site.

It belongs to the methyltransferase superfamily. Type-7 methyltransferase family. Mg(2+) is required as a cofactor.

It catalyses the reaction theobromine + S-adenosyl-L-methionine = caffeine + S-adenosyl-L-homocysteine + H(+). The enzyme catalyses 7-methylxanthine + S-adenosyl-L-methionine = theobromine + S-adenosyl-L-homocysteine + H(+). The protein operates within alkaloid biosynthesis. Its function is as follows. Involved in the biosynthesis of caffeine. Catalyzes the conversion of 7-methylxanthine (7mX) to theobromine and of theobromine to caffeine. This chain is Caffeine synthase 1, found in Camellia taliensis (Wild tea).